A 100-amino-acid chain; its full sequence is Urease subunit gamma (100 aa).

The protein belongs to the urease gamma subunit family. Heterotrimer of UreA (gamma), UreB (beta) and UreC (alpha) subunits. Three heterotrimers associate to form the active enzyme.

Its subcellular location is the cytoplasm. The catalysed reaction is urea + 2 H2O + H(+) = hydrogencarbonate + 2 NH4(+). It participates in nitrogen metabolism; urea degradation; CO(2) and NH(3) from urea (urease route): step 1/1. This is Urease subunit gamma from Escherichia coli.